We begin with the raw amino-acid sequence, 310 residues long: 4-hydroxyproline 2-epimerase (310 aa).

The active-site Proton acceptor is the C85. Substrate-binding positions include 86 to 87 (GH), H205, and D231. C235 serves as the catalytic Proton donor. 236-237 (GT) is a binding site for substrate.

It belongs to the proline racemase family.

It catalyses the reaction trans-4-hydroxy-L-proline = cis-4-hydroxy-D-proline. Catalyzes the epimerization of trans-4-hydroxy-L-proline (t4LHyp) to cis-4-hydroxy-D-proline (c4DHyp). May be involved in a degradation pathway of t4LHyp, which would allow L.aggregata to grow on t4LHyp as a sole carbon source. Displays no proline racemase activity. The chain is 4-hydroxyproline 2-epimerase from Roseibium aggregatum (strain ATCC 25650 / DSM 13394 / JCM 20685 / NBRC 16684 / NCIMB 2208 / IAM 12614 / B1) (Stappia aggregata).